The chain runs to 216 residues: MPNRDYHAERREYGFAALRRADLQTDPFHQFSDWMETALEKTQQDATAMSVSTVSADGQPHSRIVLLKTFNSDGFIFYTHYDSDKGQQIDQNAKAALLFFWPELDRQIRIEGSLQKVPRETSEAYFHSRPKDSQLAASISNQSQPVASRDILEAKLQEAMSLPDRNLTCPAHWGGYQLKPCYFEFWQGRPSRLHDRFRYQRLSKNDQAWQITRLNP.

Substrate is bound by residues 10–13 (RREY) and lysine 68. FMN contacts are provided by residues 63 to 68 (RIVLLK), 78 to 79 (YT), lysine 85, and glutamine 107. Tyrosine 125, arginine 129, and serine 133 together coordinate substrate. FMN is bound by residues 142 to 143 (QS) and tryptophan 186. Position 192–194 (192–194 (RLH)) interacts with substrate. Arginine 196 contacts FMN.

This sequence belongs to the pyridoxamine 5'-phosphate oxidase family. As to quaternary structure, homodimer. It depends on FMN as a cofactor.

The catalysed reaction is pyridoxamine 5'-phosphate + O2 + H2O = pyridoxal 5'-phosphate + H2O2 + NH4(+). The enzyme catalyses pyridoxine 5'-phosphate + O2 = pyridoxal 5'-phosphate + H2O2. It participates in cofactor metabolism; pyridoxal 5'-phosphate salvage; pyridoxal 5'-phosphate from pyridoxamine 5'-phosphate: step 1/1. It functions in the pathway cofactor metabolism; pyridoxal 5'-phosphate salvage; pyridoxal 5'-phosphate from pyridoxine 5'-phosphate: step 1/1. In terms of biological role, catalyzes the oxidation of either pyridoxine 5'-phosphate (PNP) or pyridoxamine 5'-phosphate (PMP) into pyridoxal 5'-phosphate (PLP). The polypeptide is Pyridoxine/pyridoxamine 5'-phosphate oxidase 1 (Hydrogenovibrio crunogenus (strain DSM 25203 / XCL-2) (Thiomicrospira crunogena)).